The chain runs to 571 residues: Proline--tRNA ligase (571 aa).

The protein belongs to the class-II aminoacyl-tRNA synthetase family. ProS type 1 subfamily. In terms of assembly, homodimer.

The protein resides in the cytoplasm. It catalyses the reaction tRNA(Pro) + L-proline + ATP = L-prolyl-tRNA(Pro) + AMP + diphosphate. Its function is as follows. Catalyzes the attachment of proline to tRNA(Pro) in a two-step reaction: proline is first activated by ATP to form Pro-AMP and then transferred to the acceptor end of tRNA(Pro). As ProRS can inadvertently accommodate and process non-cognate amino acids such as alanine and cysteine, to avoid such errors it has two additional distinct editing activities against alanine. One activity is designated as 'pretransfer' editing and involves the tRNA(Pro)-independent hydrolysis of activated Ala-AMP. The other activity is designated 'posttransfer' editing and involves deacylation of mischarged Ala-tRNA(Pro). The misacylated Cys-tRNA(Pro) is not edited by ProRS. The chain is Proline--tRNA ligase from Shewanella frigidimarina (strain NCIMB 400).